Here is a 260-residue protein sequence, read N- to C-terminus: Octanoyltransferase (260 aa).

One can recognise a BPL/LPL catalytic domain in the interval 42–241 (PQVPDGLLLL…SFCQVFGLQA (200 aa)). Substrate is bound by residues 97–104 (RGGEVTYH), 172–174 (AIG), and 185–187 (GFA). Catalysis depends on C203, which acts as the Acyl-thioester intermediate.

It belongs to the LipB family.

It localises to the cytoplasm. The enzyme catalyses octanoyl-[ACP] + L-lysyl-[protein] = N(6)-octanoyl-L-lysyl-[protein] + holo-[ACP] + H(+). It participates in protein modification; protein lipoylation via endogenous pathway; protein N(6)-(lipoyl)lysine from octanoyl-[acyl-carrier-protein]: step 1/2. In terms of biological role, catalyzes the transfer of endogenously produced octanoic acid from octanoyl-acyl-carrier-protein onto the lipoyl domains of lipoate-dependent enzymes. Lipoyl-ACP can also act as a substrate although octanoyl-ACP is likely to be the physiological substrate. The polypeptide is Octanoyltransferase (Synechococcus sp. (strain JA-3-3Ab) (Cyanobacteria bacterium Yellowstone A-Prime)).